The chain runs to 88 residues: Exodeoxyribonuclease 7 small subunit (88 aa).

Residues 68–88 (SDPMHPDDGEPFDPSLVSTSQ) are disordered.

Belongs to the XseB family. Heterooligomer composed of large and small subunits.

It localises to the cytoplasm. The catalysed reaction is Exonucleolytic cleavage in either 5'- to 3'- or 3'- to 5'-direction to yield nucleoside 5'-phosphates.. Bidirectionally degrades single-stranded DNA into large acid-insoluble oligonucleotides, which are then degraded further into small acid-soluble oligonucleotides. The polypeptide is Exodeoxyribonuclease 7 small subunit (Xylella fastidiosa (strain 9a5c)).